The chain runs to 347 residues: Eukaryotic translation initiation factor 3 subunit I (347 aa).

WD repeat units lie at residues 8-47, 50-89, 91-135, 151-190, 193-232, and 290-329; these read GHER…RLGT, GHTG…VIHT, TAPV…VTKE, ENHK…FITS, LHTQ…QLKS, and GHFG…FDFK.

It belongs to the eIF-3 subunit I family. In terms of assembly, component of the eukaryotic translation initiation factor 3 (eIF-3) complex.

Its subcellular location is the cytoplasm. Functionally, component of the eukaryotic translation initiation factor 3 (eIF-3) complex, which is involved in protein synthesis of a specialized repertoire of mRNAs and, together with other initiation factors, stimulates binding of mRNA and methionyl-tRNAi to the 40S ribosome. The eIF-3 complex specifically targets and initiates translation of a subset of mRNAs involved in cell proliferation. The polypeptide is Eukaryotic translation initiation factor 3 subunit I (Vanderwaltozyma polyspora (strain ATCC 22028 / DSM 70294 / BCRC 21397 / CBS 2163 / NBRC 10782 / NRRL Y-8283 / UCD 57-17) (Kluyveromyces polysporus)).